We begin with the raw amino-acid sequence, 238 residues long: Modulator of macroautophagy TMEM150B (238 aa).

Residues 1–8 are Cytoplasmic-facing; sequence MWNYLSLL. The chain crosses the membrane as a helical span at residues 9-29; sequence PVILFLWAIAGIWIVFAIAVV. An N-linked (GlcNAc...) asparagine glycan is attached at asparagine 30. At 30 to 51 the chain is on the extracellular side; it reads NGSVDLNEGFPFISICGSYAPQ. A helical membrane pass occupies residues 52 to 72; that stretch reads SCIFGQVLNIGAALTVWICIV. The Cytoplasmic segment spans residues 73-86; it reads RHHQLRDWGVKTWQ. The helical transmembrane segment at 87–107 threads the bilayer; sequence NQLILWSGILCALGTSIVGNF. At 108–116 the chain is on the extracellular side; sequence QDKNQKPTH. Residues 117–137 traverse the membrane as a helical segment; that stretch reads LAGAFLAFILGNLYFWLQFFL. Residues 138–156 lie on the Cytoplasmic side of the membrane; sequence SWWVKGLPQPGPHWIKSLR. The chain crosses the membrane as a helical span at residues 157 to 177; the sequence is LSLCSLSTILIVAMIVLHALH. The Extracellular portion of the chain corresponds to 178–186; sequence MRSASAICE. Residues 187 to 207 form a helical membrane-spanning segment; the sequence is WVVAMLLFMLFGFFAVDFSIL. At 208-238 the chain is on the cytoplasmic side; sequence RGCTLHLHPRLDSSLPQAPSGSPNIQMAQVL.

It belongs to the DRAM/TMEM150 family.

Its subcellular location is the cell membrane. It localises to the endosome membrane. The protein resides in the cytoplasmic vesicle. The protein localises to the autophagosome membrane. In terms of biological role, modulator of macroautophagy that causes accumulation of autophagosomes under basal conditions and enhances autophagic flux. Represses cell death and promotes long-term clonogenic survival of cells grown in the absence of glucose in a macroautophagy-independent manner. May have some role in extracellular matrix engulfment or growth factor receptor recycling, both of which can modulate cell survival. This chain is Modulator of macroautophagy TMEM150B, found in Mus musculus (Mouse).